Consider the following 100-residue polypeptide: Urease subunit gamma (100 aa).

Belongs to the urease gamma subunit family. As to quaternary structure, heterotrimer of UreA (gamma), UreB (beta) and UreC (alpha) subunits. Three heterotrimers associate to form the active enzyme.

Its subcellular location is the cytoplasm. It catalyses the reaction urea + 2 H2O + H(+) = hydrogencarbonate + 2 NH4(+). Its pathway is nitrogen metabolism; urea degradation; CO(2) and NH(3) from urea (urease route): step 1/1. This Citrobacter koseri (strain ATCC BAA-895 / CDC 4225-83 / SGSC4696) protein is Urease subunit gamma.